The chain runs to 93 residues: Protein translocase subunit SecE (93 aa).

A disordered region spans residues 1-33 (MTDALGSIDMPDAEDETREKKARKGGKRGKKGP). Basic residues predominate over residues 20-33 (KKARKGGKRGKKGP). Residues 64–84 (TVVIVFVVIMIGLVTVIDFGF) traverse the membrane as a helical segment.

This sequence belongs to the SecE/SEC61-gamma family. As to quaternary structure, component of the Sec protein translocase complex. Heterotrimer consisting of SecY, SecE and SecG subunits. The heterotrimers can form oligomers, although 1 heterotrimer is thought to be able to translocate proteins. Interacts with the ribosome. Interacts with SecDF, and other proteins may be involved. Interacts with SecA.

The protein localises to the cell membrane. Functionally, essential subunit of the Sec protein translocation channel SecYEG. Clamps together the 2 halves of SecY. May contact the channel plug during translocation. The polypeptide is Protein translocase subunit SecE (Streptomyces virginiae (Streptomyces cinnamonensis)).